Consider the following 119-residue polypeptide: Large ribosomal subunit protein bL20 (119 aa).

This sequence belongs to the bacterial ribosomal protein bL20 family.

Functionally, binds directly to 23S ribosomal RNA and is necessary for the in vitro assembly process of the 50S ribosomal subunit. It is not involved in the protein synthesizing functions of that subunit. The protein is Large ribosomal subunit protein bL20 of Nitrosomonas eutropha (strain DSM 101675 / C91 / Nm57).